Consider the following 916-residue polypeptide: Neurofilament medium polypeptide (916 aa).

Residues 1–10 (MSYTLDSLGN) are compositionally biased toward polar residues. Positions 1 to 51 (MSYTLDSLGNPSAYRRVTETRSSFSRVSGSPSSGFRSQSWSRGSPSTVSSS) are disordered. At serine 2 the chain carries N-acetylserine. Positions 2–104 (SYTLDSLGNP…KLSRSNEKEQ (103 aa)) are head. Over residues 21-44 (RSSFSRVSGSPSSGFRSQSWSRGS) the composition is skewed to low complexity. Serine 30 is modified (phosphoserine). The residue at position 42 (arginine 42) is an Omega-N-methylarginine. A glycan (O-linked (GlcNAc) threonine) is linked at threonine 47. Serine 99 carries the post-translational modification Phosphoserine. One can recognise an IF rod domain in the interval 101 to 412 (EKEQLQGLND…KLLEGEETRF (312 aa)). Positions 105–136 (LQGLNDRFAGYIEKVHYLEQQNKEIEAEIQAL) are coil 1A. Residues 137–149 (RQKQASHAQLGDA) are linker 1. Positions 150–248 (YDQEIRELRA…EEEVADLLAQ (99 aa)) are coil 1B. Phosphoserine is present on serine 226. Residues 249–265 (IQASHITVERKDYLKTD) are linker 12. The interval 266–287 (ISTALKEIRSQLESHSDQNMHQ) is coil 2A. Positions 288 to 291 (AEEW) are linker 2. Residues 292–412 (FKCRYAKLTE…KLLEGEETRF (121 aa)) are coil 2B. Phosphotyrosine is present on tyrosine 320. Phosphoserine occurs at positions 346 and 418. The segment at 413-916 (STFAGSITGP…AIVKEVTQSD (504 aa)) is tail. O-linked (GlcNAc) threonine glycosylation occurs at threonine 431. Phosphoserine is present on residues serine 467 and serine 483. The segment at 485–851 (KEEKKEAAEE…KKGGDKSEEK (367 aa)) is disordered. Acidic residues predominate over residues 493–505 (EEKEEEPEAEEEE). Phosphoserine is present on serine 511. Over residues 521–541 (KEEEGEKEEEEGQEEEEEEDE) the composition is skewed to acidic residues. Positions 542–561 (GAKSDQAEEGGSEKEGSSEK) are enriched in basic and acidic residues. Residues serine 545, serine 553, serine 558, and serine 559 each carry the phosphoserine modification. The segment covering 562–582 (EEGEQEEGETEAEAEGEEAEA) has biased composition (acidic residues). Threonine 571 is subject to Phosphothreonine. A compositionally biased stretch (basic and acidic residues) spans 583–614 (KEEKKVEEKSEEVATKEELVADAKVEKPEKAK). Tandem repeats lie at residues 614–626 (KSPV…EEKG), 627–639 (KSPV…EEKG), 640–652 (KSPV…EEKG), 653–665 (KSPV…EEKG), 666–678 (KSPV…EEKA), and 679–691 (KSPV…EEAK). Positions 614–691 (KSPVPKSPVE…VPKSPVEEAK (78 aa)) are 6 X 13 AA approximate tandem repeats of K-S-P-V-[PS]-K-S-P-V-E-E-[KA]-[GAK]. A phosphoserine mark is found at serine 641 and serine 646. Phosphoserine occurs at positions 680 and 685. Composition is skewed to basic and acidic residues over residues 686–701 (PVEE…KGEQ), 707–742 (KEVK…KEEA), and 755–778 (VHLE…EKAG). Residue serine 736 is modified to Phosphoserine. Phosphoserine occurs at positions 783, 821, and 837. The span at 788–828 (SDKGAKGSRKEDIAVNGEVEGKEEVEQETKEKGSGREEEKG) shows a compositional bias: basic and acidic residues. Over residues 839 to 851 (ADEKKGGDKSEEK) the composition is skewed to basic and acidic residues.

The protein belongs to the intermediate filament family. In terms of assembly, forms heterodimers with NEFL; which can further hetero-oligomerize (in vitro). Forms heterodimers with INA (in vitro). Post-translationally, there are a number of repeats of the tripeptide K-S-P, NFM is phosphorylated on a number of the serines in this motif. It is thought that phosphorylation of NFM results in the formation of interfilament cross bridges that are important in the maintenance of axonal caliber. Phosphorylation seems to play a major role in the functioning of the larger neurofilament polypeptides (NF-M and NF-H), the levels of phosphorylation being altered developmentally and coincidentally with a change in the neurofilament function. In terms of processing, phosphorylated in the head and rod regions by the PKC kinase PKN1, leading to the inhibition of polymerization.

It localises to the cytoplasm. The protein resides in the cytoskeleton. The protein localises to the cell projection. Its subcellular location is the axon. Functionally, neurofilaments usually contain three intermediate filament proteins: NEFL, NEFM, and NEFH which are involved in the maintenance of neuronal caliber. May additionally cooperate with the neuronal intermediate filament proteins PRPH and INA to form neuronal filamentous networks. The polypeptide is Neurofilament medium polypeptide (NEFM) (Homo sapiens (Human)).